A 404-amino-acid polypeptide reads, in one-letter code: Caspase-1 (404 aa).

One can recognise a CARD domain in the interval 1 to 91; that stretch reads MADKVLKEKR…YLAGTLGLSA (91 aa). Positions 1–119 are excised as a propeptide; that stretch reads MADKVLKEKR…SFPAPQAVQD (119 aa). Lys134 participates in a covalent cross-link: Glycyl lysine isopeptide (Lys-Gly) (interchain with G-Cter in ubiquitin). Active-site residues include His237 and Cys285. A propeptide spans 298-316 (interdomain linker); that stretch reads SVGVSGNLSLPTTEEFEDD. Ser302 carries the phosphoserine modification.

This sequence belongs to the peptidase C14A family. In terms of assembly, heterotetramer that consists of two anti-parallel arranged heterodimers, each one formed by a 20 kDa (Caspase-1 subunit p20) and a 10 kDa (Caspase-1 subunit p10) subunit. May be a component of the inflammasome, a protein complex which also includes PYCARD, CARD8 and NLRP2 and whose function would be the activation of pro-inflammatory caspases. Component of the AIM2 PANoptosome complex, a multiprotein complex that drives inflammatory cell death (PANoptosis). Interacts with CARD8; interacts with the released C-terminus of CARD8 which forms an inflammasome and directly activates CASP1 to promote pyroptosis. Both the p10 and p20 subunits interact with MEFV. Interacts with CARD17P/INCA and CARD18. Interacts with SERPINB1; this interaction regulates CASP1 activity. As to quaternary structure, heterotetramer that consists of two anti-parallel arranged heterodimers, each one formed by a 20 kDa (Caspase-1 subunit p20) and a 10 kDa (Caspase-1 subunit p10) subunit. Can form a heterodimer with isoform epsilon which then has an inhibitory effect. Heterotetramer that consists of two anti-parallel arranged heterodimers, each one formed by a 20 kDa (Caspase-1 subunit p20) and a 10 kDa (Caspase-1 subunit p10) subunit. In terms of assembly, can form a heterodimer with Caspase-1 subunit p20 which then has an inhibitory effect. The two subunits are derived from the precursor sequence by an autocatalytic mechanism. In terms of processing, ubiquitinated via 'Lys-11'-linked polyubiquitination. Deubiquitinated by USP8. Post-translationally, cleavage in the interdomain linker region is required to induce pyroptosis. In terms of tissue distribution, expressed in larger amounts in spleen and lung. Detected in liver, heart, small intestine, colon, thymus, prostate, skeletal muscle, peripheral blood leukocytes, kidney and testis. No expression in the brain.

The protein localises to the cytoplasm. It localises to the cell membrane. It catalyses the reaction Strict requirement for an Asp residue at position P1 and has a preferred cleavage sequence of Tyr-Val-Ala-Asp-|-.. Its activity is regulated as follows. (Microbial infection) Specifically inhibited by the cowpox virus Crma protein. Functionally, thiol protease involved in a variety of inflammatory processes by proteolytically cleaving other proteins, such as the precursors of the inflammatory cytokines interleukin-1 beta (IL1B) and interleukin 18 (IL18) as well as the pyroptosis inducer Gasdermin-D (GSDMD), into active mature peptides. Plays a key role in cell immunity as an inflammatory response initiator: once activated through formation of an inflammasome complex, it initiates a pro-inflammatory response through the cleavage of the two inflammatory cytokines IL1B and IL18, releasing the mature cytokines which are involved in a variety of inflammatory processes. Cleaves a tetrapeptide after an Asp residue at position P1. Also initiates pyroptosis, a programmed lytic cell death pathway, through cleavage of GSDMD. In contrast to cleavage of interleukin IL1B, recognition and cleavage of GSDMD is not strictly dependent on the consensus cleavage site but depends on an exosite interface on CASP1 that recognizes and binds the Gasdermin-D, C-terminal (GSDMD-CT) part. Cleaves and activates CASP7 in response to bacterial infection, promoting plasma membrane repair. Upon inflammasome activation, during DNA virus infection but not RNA virus challenge, controls antiviral immunity through the cleavage of CGAS, rendering it inactive. In apoptotic cells, cleaves SPHK2 which is released from cells and remains enzymatically active extracellularly. Apoptosis inactive. This chain is Caspase-1 (CASP1), found in Homo sapiens (Human).